The chain runs to 117 residues: DNA polymerase epsilon subunit 4 (117 aa).

The tract at residues 1–36 (MAAAAAAGSGTPREEEGPAGEAAASQPQAPTSVPGA) is disordered. Residue alanine 2 is modified to N-acetylalanine. Threonine 11 bears the Phosphothreonine mark. Residues 19-30 (AGEAAASQPQAP) show a composition bias toward low complexity. Serine 25 is modified (phosphoserine).

In terms of assembly, component of the DNA polymerase epsilon complex consisting of four subunits: the catalytic subunit POLE and the accessory subunits POLE2, POLE3 and POLE4. Interaction with POLE3 is a prerequisite for further binding with POLE and POLE2.

It is found in the nucleus. Functionally, accessory component of the DNA polymerase epsilon complex. Participates in DNA repair and in chromosomal DNA replication. This chain is DNA polymerase epsilon subunit 4 (POLE4), found in Homo sapiens (Human).